Here is a 752-residue protein sequence, read N- to C-terminus: Photosystem I P700 chlorophyll a apoprotein A1 (752 aa).

The next 8 membrane-spanning stretches (helical) occupy residues I73 to A96, L159 to H182, M198 to L222, T294 to Y312, W349 to Y372, L388 to V414, A436 to H458, and F533 to L551. [4Fe-4S] cluster-binding residues include C575 and C584. 2 helical membrane passes run H591–W612 and L666–F688. H677 contacts chlorophyll a'. Chlorophyll a contacts are provided by M685 and Y693. W694 provides a ligand contact to phylloquinone. A helical membrane pass occupies residues A726–A746.

The protein belongs to the PsaA/PsaB family. In terms of assembly, the PsaA/B heterodimer binds the P700 chlorophyll special pair and subsequent electron acceptors. PSI consists of a core antenna complex that captures photons, and an electron transfer chain that converts photonic excitation into a charge separation. The eukaryotic PSI reaction center is composed of at least 11 subunits. The cofactor is P700 is a chlorophyll a/chlorophyll a' dimer, A0 is one or more chlorophyll a, A1 is one or both phylloquinones and FX is a shared 4Fe-4S iron-sulfur center..

Its subcellular location is the plastid. It localises to the chloroplast thylakoid membrane. It carries out the reaction reduced [plastocyanin] + hnu + oxidized [2Fe-2S]-[ferredoxin] = oxidized [plastocyanin] + reduced [2Fe-2S]-[ferredoxin]. Its function is as follows. PsaA and PsaB bind P700, the primary electron donor of photosystem I (PSI), as well as the electron acceptors A0, A1 and FX. PSI is a plastocyanin/cytochrome c6-ferredoxin oxidoreductase, converting photonic excitation into a charge separation, which transfers an electron from the donor P700 chlorophyll pair to the spectroscopically characterized acceptors A0, A1, FX, FA and FB in turn. Oxidized P700 is reduced on the lumenal side of the thylakoid membrane by plastocyanin or cytochrome c6. This Emiliania huxleyi (Coccolithophore) protein is Photosystem I P700 chlorophyll a apoprotein A1.